A 194-amino-acid polypeptide reads, in one-letter code: Imidazoleglycerol-phosphate dehydratase (194 aa).

This sequence belongs to the imidazoleglycerol-phosphate dehydratase family.

The protein resides in the cytoplasm. It carries out the reaction D-erythro-1-(imidazol-4-yl)glycerol 3-phosphate = 3-(imidazol-4-yl)-2-oxopropyl phosphate + H2O. It participates in amino-acid biosynthesis; L-histidine biosynthesis; L-histidine from 5-phospho-alpha-D-ribose 1-diphosphate: step 6/9. The protein is Imidazoleglycerol-phosphate dehydratase of Bacillus thuringiensis (strain Al Hakam).